A 396-amino-acid chain; its full sequence is Ribosomal RNA large subunit methyltransferase I (396 aa).

Residues 2 to 81 form the PUA domain; sequence TVRLILAKGR…EVIDCAFFIR (80 aa).

It belongs to the methyltransferase superfamily. RlmI family.

The protein localises to the cytoplasm. The enzyme catalyses cytidine(1962) in 23S rRNA + S-adenosyl-L-methionine = 5-methylcytidine(1962) in 23S rRNA + S-adenosyl-L-homocysteine + H(+). Its function is as follows. Specifically methylates the cytosine at position 1962 (m5C1962) of 23S rRNA. The protein is Ribosomal RNA large subunit methyltransferase I of Yersinia pestis bv. Antiqua (strain Antiqua).